A 158-amino-acid polypeptide reads, in one-letter code: Snaclec flavocetin-A subunit alpha (158 aa).

Residues 1 to 23 form the signal peptide; the sequence is MERLIFVSFGLLVVILSLSGTGA. 3 disulfide bridges follow: C27-C38, C55-C152, and C127-C144. The C-type lectin domain maps to 34–153; that stretch reads YDRYCYQAFS…CGTENPFVCK (120 aa).

This sequence belongs to the snaclec family. In terms of assembly, tetramer of heterodimers of alpha and beta subunits (alphabeta)(4); disulfide-linked. In terms of tissue distribution, expressed by the venom gland.

The protein resides in the secreted. In terms of biological role, strong platelet aggregation inhibitor. Binds specifically to platelet glycoprotein Ibalpha (GP1BA) with high affinity and inhibits vWF-dependent platelet aggregation. Has also been observed to induce small agglutinates in washed platelets by binding to GPIb. This is Snaclec flavocetin-A subunit alpha from Protobothrops flavoviridis (Habu).